Here is a 256-residue protein sequence, read N- to C-terminus: Small ribosomal subunit protein uS2 (256 aa).

Belongs to the universal ribosomal protein uS2 family.

The sequence is that of Small ribosomal subunit protein uS2 from Acidiphilium cryptum (strain JF-5).